The sequence spans 95 residues: Phosphoribosyl-ATP pyrophosphatase (95 aa).

Belongs to the PRA-PH family.

Its subcellular location is the cytoplasm. The catalysed reaction is 1-(5-phospho-beta-D-ribosyl)-ATP + H2O = 1-(5-phospho-beta-D-ribosyl)-5'-AMP + diphosphate + H(+). It participates in amino-acid biosynthesis; L-histidine biosynthesis; L-histidine from 5-phospho-alpha-D-ribose 1-diphosphate: step 2/9. This Methanosphaera stadtmanae (strain ATCC 43021 / DSM 3091 / JCM 11832 / MCB-3) protein is Phosphoribosyl-ATP pyrophosphatase.